The primary structure comprises 198 residues: MLYPTPIAKLIDSYSKLPGIGIKTATRLAFYTIGMSNEDVNDFAKNLLAAKRELTYCSICGNLTDDDPCHICTDTSRDQTTILVVEDAKDVSAMEKIQEYHGYYHVLHGLISPMNGVGPDDINLKSLITRLMDGKVSEVIVATNATADGEATSMYISRVLKPAGIKVTRLARGLAVGSDIEYADEVTLLRAIENRTEL.

A C4-type zinc finger spans residues 57 to 72; sequence CSICGNLTDDDPCHIC. A Toprim domain is found at 80–175; sequence TTILVVEDAK…KVTRLARGLA (96 aa).

The protein belongs to the RecR family.

May play a role in DNA repair. It seems to be involved in an RecBC-independent recombinational process of DNA repair. It may act with RecF and RecO. The polypeptide is Recombination protein RecR (Streptococcus pyogenes serotype M1).